The chain runs to 207 residues: MGKCSGRCTLVAFCCLQLVAALQRQIFDFLGYQWAPILANFLHIMAVILGIFGTVQYRSRYLILYAAWLVLWVGWNAFIICFYLEVGQLSQDRDFIMTFNTSLHRSWWMENGPGCLVTPVLNSRLALEDHHVISVTGCLLDYPYIEALSSALQIFLALFGFVFACYVSKVFLEEEDSFDFIGGFDSYGYQAPQKTSHLQLQPLYTSG.

3 helical membrane-spanning segments follow: residues 2 to 22 (GKCSGRCTLVAFCCLQLVAAL), 35 to 55 (APILANFLHIMAVILGIFGTV), and 62 to 82 (LILYAAWLVLWVGWNAFIICF). N-linked (GlcNAc...) asparagine glycosylation is present at Asn100. Residues 147-167 (ALSSALQIFLALFGFVFACYV) form a helical membrane-spanning segment.

It belongs to the NKAIN family. Interacts with ATP1B1 C-terminus. Detected in the brain only and specifically in neurons. Expressed in multiple regions such as cerebral cortex, thalamus, hippocampus, olfactory bulb and brainstem as well as in cerebellum with high expression in granular cell layer.

It localises to the cell membrane. The chain is Sodium/potassium-transporting ATPase subunit beta-1-interacting protein 1 (Nkain1) from Mus musculus (Mouse).